Consider the following 83-residue polypeptide: Apolipoprotein C-I, acidic form (83 aa).

A signal peptide spans 1-26 (MRLFLSLPVLVVVLSMVLEGPAPAQG).

It belongs to the apolipoprotein C1 family.

It localises to the secreted. Inhibitor of lipoprotein binding to the low density lipoprotein (LDL) receptor, LDL receptor-related protein, and very low density lipoprotein (VLDL) receptor. Associates with high density lipoproteins (HDL) and the triacylglycerol-rich lipoproteins in the plasma and makes up about 10% of the protein of the VLDL and 2% of that of HDL. Appears to interfere directly with fatty acid uptake and is also the major plasma inhibitor of cholesteryl ester transfer protein (CETP). Binds free fatty acids and reduces their intracellular esterification. Modulates the interaction of APOE with beta-migrating VLDL and inhibits binding of beta-VLDL to the LDL receptor-related protein. This chain is Apolipoprotein C-I, acidic form (APOC1A), found in Pongo abelii (Sumatran orangutan).